Reading from the N-terminus, the 158-residue chain is 6,7-dimethyl-8-ribityllumazine synthase (158 aa).

5-amino-6-(D-ribitylamino)uracil-binding positions include Phe-22, 57 to 59, and 81 to 83; these read SYE and TVI. The active-site Proton donor is His-89. Phe-114 contributes to the 5-amino-6-(D-ribitylamino)uracil binding site. Arg-128 is a binding site for (2S)-2-hydroxy-3-oxobutyl phosphate.

This sequence belongs to the DMRL synthase family. As to quaternary structure, forms an icosahedral capsid composed of 60 subunits, arranged as a dodecamer of pentamers.

The enzyme catalyses (2S)-2-hydroxy-3-oxobutyl phosphate + 5-amino-6-(D-ribitylamino)uracil = 6,7-dimethyl-8-(1-D-ribityl)lumazine + phosphate + 2 H2O + H(+). The protein operates within cofactor biosynthesis; riboflavin biosynthesis; riboflavin from 2-hydroxy-3-oxobutyl phosphate and 5-amino-6-(D-ribitylamino)uracil: step 1/2. Functionally, catalyzes the formation of 6,7-dimethyl-8-ribityllumazine by condensation of 5-amino-6-(D-ribitylamino)uracil with 3,4-dihydroxy-2-butanone 4-phosphate. This is the penultimate step in the biosynthesis of riboflavin. In Blochmanniella pennsylvanica (strain BPEN), this protein is 6,7-dimethyl-8-ribityllumazine synthase.